A 429-amino-acid polypeptide reads, in one-letter code: Glutamate-1-semialdehyde 2,1-aminomutase 1 (429 aa).

Lys267 is subject to N6-(pyridoxal phosphate)lysine.

Belongs to the class-III pyridoxal-phosphate-dependent aminotransferase family. HemL subfamily. Homodimer. Requires pyridoxal 5'-phosphate as cofactor.

The protein localises to the cytoplasm. It carries out the reaction (S)-4-amino-5-oxopentanoate = 5-aminolevulinate. The protein operates within porphyrin-containing compound metabolism; protoporphyrin-IX biosynthesis; 5-aminolevulinate from L-glutamyl-tRNA(Glu): step 2/2. This Bacillus velezensis (strain DSM 23117 / BGSC 10A6 / LMG 26770 / FZB42) (Bacillus amyloliquefaciens subsp. plantarum) protein is Glutamate-1-semialdehyde 2,1-aminomutase 1.